The sequence spans 64 residues: Large ribosomal subunit protein bL35 (64 aa).

This sequence belongs to the bacterial ribosomal protein bL35 family.

The sequence is that of Large ribosomal subunit protein bL35 from Kineococcus radiotolerans (strain ATCC BAA-149 / DSM 14245 / SRS30216).